A 520-amino-acid polypeptide reads, in one-letter code: Probable methylmalonate-semialdehyde/malonate-semialdehyde dehydrogenase [acylating], mitochondrial (520 aa).

NAD(+) contacts are provided by alanine 169, phenylalanine 171, lysine 195, glutamate 198, arginine 199, and serine 248. Cysteine 303 serves as the catalytic Nucleophile. Glutamate 403 lines the NAD(+) pocket.

The protein belongs to the aldehyde dehydrogenase family. As to quaternary structure, homotetramer.

It localises to the mitochondrion. It catalyses the reaction 2-methyl-3-oxopropanoate + NAD(+) + CoA + H2O = propanoyl-CoA + hydrogencarbonate + NADH + H(+). It carries out the reaction 3-oxopropanoate + NAD(+) + CoA + H2O = hydrogencarbonate + acetyl-CoA + NADH + H(+). Its function is as follows. Probable malonate and methylmalonate semialdehyde dehydrogenase involved in the catabolism of valine, thymine, and compounds catabolized by way of beta-alanine, including uracil and cytidine. The chain is Probable methylmalonate-semialdehyde/malonate-semialdehyde dehydrogenase [acylating], mitochondrial from Drosophila melanogaster (Fruit fly).